The primary structure comprises 362 residues: Solute carrier family 25 member 3 (362 aa).

The N-terminal 49 residues, 1–49 (MYSSVVHLARANPFNAPHLQLVHDGLAGPRSDPAGPPGPPRRSRNLAAA), are a transit peptide targeting the mitochondrion. Residues 50–63 (AVEEQYSCDYGSGR) are Mitochondrial intermembrane-facing. Solcar repeat units lie at residues 63–147 (RFFI…FKVL), 160–244 (WRTS…TVEA), and 261–339 (EQLV…VKVY). A helical membrane pass occupies residues 64–86 (FFILCGLGGIISCGTTHTALVPL). The Mitochondrial matrix portion of the chain corresponds to 87–121 (DLVKCRMQVDPQKYKSIFNGFSVTLKEDGFRGLAK). Residue Lys-99 is modified to N6-acetyllysine. Residue Lys-112 is modified to N6-methyllysine. The chain crosses the membrane as a helical span at residues 122 to 141 (GWAPTFIGYSLQGLCKFGFY). Over 142-161 (EVFKVLYSNMLGEENAYLWR) the chain is Mitochondrial intermembrane. The chain crosses the membrane as a helical span at residues 162 to 183 (TSLYLAASASAEFFADIALAPM). The Mitochondrial matrix portion of the chain corresponds to 184–218 (EAAKVRIQTQPGYANTLRDAAPKMYKEEGLKAFYK). Tyr-196 is subject to Phosphotyrosine. At Lys-209 the chain carries N6-acetyllysine. Residues 219-238 (GVAPLWMRQIPYTMMKFACF) form a helical membrane-spanning segment. At 239–261 (ERTVEALYKFVVPKPRSECSKPE) the chain is on the mitochondrial intermembrane side. Residues 262–284 (QLVVTFVAGYIAGVFCAIVSHPA) traverse the membrane as a helical segment. Topologically, residues 285 to 314 (DSVVSVLNKEKGSSASEVLKRLGFRGVWKG) are mitochondrial matrix. The helical transmembrane segment at 315–333 (LFARIIMIGTLTALQWFIY) threads the bilayer. Residues 334-362 (DSVKVYFRLPRPPPPEMPESLKKKLGYTQ) are Mitochondrial intermembrane-facing.

This sequence belongs to the mitochondrial carrier (TC 2.A.29) family. As to quaternary structure, interacts with PPIF; the interaction is impaired by CsA. In terms of tissue distribution, expressed in heart, diaphragm and skeletal muscle (at protein level). Not detected in liver, lung, brain, and kidney (at protein level). Ubiquitous (at protein level).

It localises to the mitochondrion inner membrane. The enzyme catalyses phosphate(in) + H(+)(in) = phosphate(out) + H(+)(out). With respect to regulation, up-regulated in the presence of cardiolipin. In terms of biological role, inorganic ion transporter that transports phosphate or copper ions across the mitochondrial inner membrane into the matrix compartment. Mediates proton-coupled symport of phosphate ions necessary for mitochondrial oxidative phosphorylation of ADP to ATP. Transports copper ions probably in the form of anionic copper(I) complexes to maintain mitochondrial matrix copper pool and to supply copper for cytochrome C oxidase complex assembly. May also play a role in regulation of the mitochondrial permeability transition pore (mPTP). This is Solute carrier family 25 member 3 from Bos taurus (Bovine).